The primary structure comprises 599 residues: uncharacterized protein (599 aa).

The span at 1–10 (MEQQSENVYF) shows a compositional bias: polar residues. The segment at 1–146 (MEQQSENVYF…EPSFTLTELP (146 aa)) is disordered. Low complexity predominate over residues 11–20 (SGSESESLSD). Over residues 24–44 (RAQPQNQNSDNSRSASLTPPD) the composition is skewed to polar residues. 2 stretches are compositionally biased toward acidic residues: residues 46 to 56 (SDLEDYVDSDS) and 89 to 114 (NGSDDDSEDEDESNDEQDLVESEEED). Positions 118–127 (RSSSRSAMDI) are enriched in low complexity. Over residues 128–138 (SSEEDSGDDEP) the composition is skewed to acidic residues.

It belongs to the IIV-6 229L family.

This is an uncharacterized protein from Aedes vexans (Inland floodwater mosquito).